We begin with the raw amino-acid sequence, 259 residues long: Type III pantothenate kinase (259 aa).

Position 6 to 13 (6 to 13 (DVGNTNIV)) interacts with ATP. Substrate is bound by residues Tyr-100 and 107–110 (GADR). The active-site Proton acceptor is Asp-109. K(+) is bound at residue Asp-129. ATP is bound at residue Thr-132. Thr-184 contributes to the substrate binding site.

It belongs to the type III pantothenate kinase family. As to quaternary structure, homodimer. It depends on NH4(+) as a cofactor. K(+) is required as a cofactor.

Its subcellular location is the cytoplasm. The catalysed reaction is (R)-pantothenate + ATP = (R)-4'-phosphopantothenate + ADP + H(+). It functions in the pathway cofactor biosynthesis; coenzyme A biosynthesis; CoA from (R)-pantothenate: step 1/5. Catalyzes the phosphorylation of pantothenate (Pan), the first step in CoA biosynthesis. This Clostridium perfringens (strain ATCC 13124 / DSM 756 / JCM 1290 / NCIMB 6125 / NCTC 8237 / Type A) protein is Type III pantothenate kinase.